We begin with the raw amino-acid sequence, 281 residues long: Transcription factor HES-1 (281 aa).

A disordered region spans residues 1–44 (MPADIMEKNSSSPVAATPASVNTTPDKPKTASEHRKSSKPIMEK). Over residues 10-21 (SSSPVAATPASV) the composition is skewed to low complexity. Positions 26–35 (DKPKTASEHR) are enriched in basic and acidic residues. Residues 34–91 (HRKSSKPIMEKRRRARINESLSQLKTLILDALKKDSSRHSKLEKADILEMTVKHLRNL) enclose the bHLH domain. In terms of domain architecture, Orange spans 110–143 (YRAGFSECMNEVTRFLSTCEGVNTEVRTRLLGHL). 2 disordered regions span residues 158 to 206 (QAHP…PCKL) and 255 to 281 (TSVG…PWRN). Composition is skewed to pro residues over residues 164 to 174 (QAPPPPPPSGP) and 182 to 201 (FAPP…PPGS). The segment covering 255–272 (TSVGPNAVSPSSGSSLTA) has biased composition (polar residues). The WRPW motif signature appears at 276–279 (WRPW).

As to quaternary structure, interacts with SIRT1. Interacts weakly with TLE2. Interacts with HES6. Transcription repression requires formation of a complex with a corepressor protein of the Groucho/TLE family. Interacts (via WPRW motif) with TLE1. Interacts with an FA complex, composed of FANCA, FANCF, FANCG and FANCL, but not of FANCC, nor FANCE. In terms of tissue distribution, present in all tissues examined but highest in epithelial cells and in mesoderm-derived tissues such as embryonal muscle cells.

Its subcellular location is the nucleus. In terms of biological role, transcriptional repressor of genes that require a bHLH protein for their transcription. May act as a negative regulator of myogenesis by inhibiting the functions of MYOD1 and ASH1. Binds DNA on N-box motifs: 5'-CACNAG-3' with high affinity and on E-box motifs: 5'-CANNTG-3' with low affinity. May play a role in a functional FA core complex response to DNA cross-link damage, being required for the stability and nuclear localization of FA core complex proteins, as well as for FANCD2 monoubiquitination in response to DNA damage. This Rattus norvegicus (Rat) protein is Transcription factor HES-1 (Hes1).